Here is a 213-residue protein sequence, read N- to C-terminus: Imidazole glycerol phosphate synthase subunit HisH 1 (213 aa).

One can recognise a Glutamine amidotransferase type-1 domain in the interval 3–213; the sequence is SVSILDYGVG…LSIIQQFLQI (211 aa). Catalysis depends on Cys81, which acts as the Nucleophile. Active-site residues include His195 and Glu197.

As to quaternary structure, heterodimer of HisH and HisF.

The protein resides in the cytoplasm. It carries out the reaction 5-[(5-phospho-1-deoxy-D-ribulos-1-ylimino)methylamino]-1-(5-phospho-beta-D-ribosyl)imidazole-4-carboxamide + L-glutamine = D-erythro-1-(imidazol-4-yl)glycerol 3-phosphate + 5-amino-1-(5-phospho-beta-D-ribosyl)imidazole-4-carboxamide + L-glutamate + H(+). The enzyme catalyses L-glutamine + H2O = L-glutamate + NH4(+). The protein operates within amino-acid biosynthesis; L-histidine biosynthesis; L-histidine from 5-phospho-alpha-D-ribose 1-diphosphate: step 5/9. Functionally, IGPS catalyzes the conversion of PRFAR and glutamine to IGP, AICAR and glutamate. The HisH subunit provides the glutamine amidotransferase activity that produces the ammonia necessary to HisF for the synthesis of IGP and AICAR. The sequence is that of Imidazole glycerol phosphate synthase subunit HisH 1 from Legionella pneumophila (strain Lens).